The sequence spans 189 residues: UPF0301 protein A1C_00165 (189 aa).

It belongs to the UPF0301 (AlgH) family.

The protein is UPF0301 protein A1C_00165 of Rickettsia akari (strain Hartford).